A 165-amino-acid chain; its full sequence is Cysteine-rich hydrophobic domain-containing protein 2 (165 aa).

Residues 1–26 adopt a coiled-coil conformation; sequence MADFDEIYEEEEDEERALEEQLLKYS. A CHIC motif (Cys-rich) motif is present at residues 88-106; it reads CGCLCCCCTLGCSMWPVIC.

It belongs to the CHIC family. Palmitoylation in the CHIC motif is required for membrane association.

The protein resides in the membrane. Its subcellular location is the golgi apparatus. In Mus musculus (Mouse), this protein is Cysteine-rich hydrophobic domain-containing protein 2 (Chic2).